Consider the following 203-residue polypeptide: Large ribosomal subunit protein bL25 (203 aa).

It belongs to the bacterial ribosomal protein bL25 family. CTC subfamily. In terms of assembly, part of the 50S ribosomal subunit; part of the 5S rRNA/L5/L18/L25 subcomplex. Contacts the 5S rRNA. Binds to the 5S rRNA independently of L5 and L18.

Functionally, this is one of the proteins that binds to the 5S RNA in the ribosome where it forms part of the central protuberance. The protein is Large ribosomal subunit protein bL25 of Chlorobium phaeovibrioides (strain DSM 265 / 1930) (Prosthecochloris vibrioformis (strain DSM 265)).